The primary structure comprises 166 residues: 3-isopropylmalate dehydratase small subunit 1 (166 aa).

This sequence belongs to the LeuD family. LeuD type 2 subfamily. Heterodimer of LeuC and LeuD.

The enzyme catalyses (2R,3S)-3-isopropylmalate = (2S)-2-isopropylmalate. The protein operates within amino-acid biosynthesis; L-leucine biosynthesis; L-leucine from 3-methyl-2-oxobutanoate: step 2/4. Functionally, catalyzes the isomerization between 2-isopropylmalate and 3-isopropylmalate, via the formation of 2-isopropylmaleate. The protein is 3-isopropylmalate dehydratase small subunit 1 (leuD1) of Thermotoga maritima (strain ATCC 43589 / DSM 3109 / JCM 10099 / NBRC 100826 / MSB8).